The chain runs to 534 residues: Cytochrome P450 monooxygenase AN1598 (534 aa).

The N-linked (GlcNAc...) asparagine glycan is linked to asparagine 3. Residues 25–45 (LYLEILGVLSVVYLLQTLVAY) traverse the membrane as a helical segment. Residue asparagine 95 is glycosylated (N-linked (GlcNAc...) asparagine). Residue cysteine 464 participates in heme binding. The N-linked (GlcNAc...) asparagine glycan is linked to asparagine 498.

It belongs to the cytochrome P450 family. Heme serves as cofactor.

Its subcellular location is the membrane. Its pathway is secondary metabolite biosynthesis; terpenoid biosynthesis. In terms of biological role, bifunctional terpene synthase; part of the gene cluster that mediates the biosynthesis of the diterpene ent-pimara-8(14),15-diene (PD). Within the cluster, the HMG-CoA reductase AN1593 functions in the mevalonate pathway, which produces isoprenoid precursors. The geranylgeranyl pyrophosphate (GGPP) synthase AN1592 is needed in the formation of GGPP, the precursor for diterpenes. Lastly, the pimaradiene synthase pbcA performs the 2 cyclization steps that convert GGPP to ent-pimara-8(14),15-diene. The putative roles of the remaining cluster enzymes in ent-pimara-8(14),15-diene biosynthesis is unclear. The cytochrome P450 monooxygenase AN1598, the glutathione S-transferase AN1595, the oxidoreductases AN1596 and AN1597 probably function as decorative enzymes. It is possible that in biological conditions the compound is oxidized to ent-pimara-8(14),15-dien-19-oic acid, which is a bioactive diterpene compound predominant in many plant extracts. The protein is Cytochrome P450 monooxygenase AN1598 of Emericella nidulans (strain FGSC A4 / ATCC 38163 / CBS 112.46 / NRRL 194 / M139) (Aspergillus nidulans).